A 275-amino-acid polypeptide reads, in one-letter code: Probable ribosomal RNA small subunit methyltransferase A (275 aa).

Residues Leu-13, Gly-38, Glu-59, Asp-84, and Asn-101 each contribute to the S-adenosyl-L-methionine site.

It belongs to the class I-like SAM-binding methyltransferase superfamily. rRNA adenine N(6)-methyltransferase family. RsmA subfamily.

Its subcellular location is the cytoplasm. In terms of biological role, specifically dimethylates two adjacent adenosines in the loop of a conserved hairpin near the 3'-end of 16S rRNA in the 30S particle. May play a critical role in biogenesis of 30S subunits. This chain is Probable ribosomal RNA small subunit methyltransferase A, found in Methanocaldococcus jannaschii (strain ATCC 43067 / DSM 2661 / JAL-1 / JCM 10045 / NBRC 100440) (Methanococcus jannaschii).